The following is a 188-amino-acid chain: PRA1 family protein 3 (188 aa).

Met1 bears the N-acetylmethionine mark. Over 1–35 (MDVNIAPLRAWDDFFPGSDRFAQPDFRDISKWNNR) the chain is Cytoplasmic. A run of 2 helical transmembrane segments spans residues 36-56 (VVSN…MMIS) and 57-77 (VVGF…VLVF). The Cytoplasmic segment spans residues 78–93 (TGFVWAAHNKDALRRL). Transmembrane regions (helical) follow at residues 94–114 (KKRY…FLIS) and 115–135 (MFGG…LMFI). Residues 103-117 (MVVMLASYFLISMFG) are required for homodimer formation and heterodimer formation with ARL6IP1. Over 136–188 (HASLRLRNLKNKLENKMEGIGLKRTPMGIVLDALEQQEEGINRLTDYISKVKE) the chain is Cytoplasmic. Positions 136–188 (HASLRLRNLKNKLENKMEGIGLKRTPMGIVLDALEQQEEGINRLTDYISKVKE) are targeting to endoplasmic reticulum membrane.

Belongs to the PRA1 family. In terms of assembly, homodimer. Heterodimer with ARL6IP1. Forms multimers. Interacts with ARL6. Interacts with prenylated RAB1A and RAB3A. Interacts with SLC1A1/EAAC1. Interacts with RTN2 (via first transmembrane domain). Does not interact with VAMP1, VAMP2 or VAMP3.

It localises to the endoplasmic reticulum membrane. The protein localises to the cell membrane. Its subcellular location is the cytoplasm. The protein resides in the cytoskeleton. In terms of biological role, regulates intracellular concentrations of taurine and glutamate. Negatively modulates SLC1A1/EAAC1 glutamate transport activity by decreasing its affinity for glutamate in a PKC activity-dependent manner. Plays a role in the retention of SLC1A1/EAAC1 in the endoplasmic reticulum. The sequence is that of PRA1 family protein 3 (ARL6IP5) from Macaca fascicularis (Crab-eating macaque).